Here is a 320-residue protein sequence, read N- to C-terminus: Biotin synthase 2 (320 aa).

Positions 34 to 261 (NVVQCSKLLS…ASYVRLSAGR (228 aa)) constitute a Radical SAM core domain. [4Fe-4S] cluster-binding residues include Cys49, Cys53, and Cys56. Positions 93, 124, 184, and 256 each coordinate [2Fe-2S] cluster.

The protein belongs to the radical SAM superfamily. Biotin synthase family. Homodimer. [4Fe-4S] cluster serves as cofactor. [2Fe-2S] cluster is required as a cofactor.

The catalysed reaction is (4R,5S)-dethiobiotin + (sulfur carrier)-SH + 2 reduced [2Fe-2S]-[ferredoxin] + 2 S-adenosyl-L-methionine = (sulfur carrier)-H + biotin + 2 5'-deoxyadenosine + 2 L-methionine + 2 oxidized [2Fe-2S]-[ferredoxin]. Its pathway is cofactor biosynthesis; biotin biosynthesis; biotin from 7,8-diaminononanoate: step 2/2. In terms of biological role, catalyzes the conversion of dethiobiotin (DTB) to biotin by the insertion of a sulfur atom into dethiobiotin via a radical-based mechanism. The sequence is that of Biotin synthase 2 from Paracoccus denitrificans (strain Pd 1222).